A 539-amino-acid polypeptide reads, in one-letter code: Alpha-aminoadipic semialdehyde dehydrogenase (539 aa).

The N-terminal 26 residues, 1–26 (MWRVPRRLCVQSVKTSKLSGPWSRPA), are a transit peptide targeting the mitochondrion. Residues K86, K94, and K97 each carry the N6-acetyllysine; alternate modification. N6-succinyllysine; alternate is present on residues K86, K94, and K97. Residues 192 to 194 (TAF), K218, 258 to 259 (GT), 274 to 275 (GS), 274 to 279 (GSTQVG), and 296 to 297 (EL) contribute to the NAD(+) site. E296 functions as the Proton acceptor in the catalytic mechanism. C330 serves as the catalytic Nucleophile. T331 is a binding site for (S)-2-amino-6-oxohexanoate. Residue E427 participates in NAD(+) binding. At K462 the chain carries N6-acetyllysine. Positions 489 and 490 each coordinate (S)-2-amino-6-oxohexanoate. K500 carries the post-translational modification N6-acetyllysine. K537 carries the N6-succinyllysine modification.

It belongs to the aldehyde dehydrogenase family. As to quaternary structure, homotetramer. As to expression, present in liver, kidney, brain and pancreas, and at lower levels in jejunum, duodenum, stomach and testes (at protein level).

It is found in the cytoplasm. Its subcellular location is the cytosol. The protein localises to the nucleus. The protein resides in the mitochondrion. The catalysed reaction is nonanal + NAD(+) + H2O = nonanoate + NADH + 2 H(+). It carries out the reaction (S)-2-amino-6-oxohexanoate + NAD(+) + H2O = L-2-aminoadipate + NADH + 2 H(+). The enzyme catalyses betaine aldehyde + NAD(+) + H2O = glycine betaine + NADH + 2 H(+). It catalyses the reaction an aldehyde + NAD(+) + H2O = a carboxylate + NADH + 2 H(+). The catalysed reaction is hexanal + NAD(+) + H2O = hexanoate + NADH + 2 H(+). It carries out the reaction octanal + NAD(+) + H2O = octanoate + NADH + 2 H(+). The enzyme catalyses (E)-non-2-enal + NAD(+) + H2O = (E)-non-2-enoate + NADH + 2 H(+). It catalyses the reaction (E)-4-hydroxynon-2-enal + NAD(+) + H2O = (E)-4-hydroxynon-2-enoate + NADH + 2 H(+). The protein operates within amine and polyamine biosynthesis; betaine biosynthesis via choline pathway; betaine from betaine aldehyde: step 1/1. Functionally, multifunctional enzyme mediating important protective effects. Metabolizes betaine aldehyde to betaine, an important cellular osmolyte and methyl donor. Protects cells from oxidative stress by metabolizing a number of lipid peroxidation-derived aldehydes. Involved in lysine catabolism. The chain is Alpha-aminoadipic semialdehyde dehydrogenase from Mus musculus (Mouse).